Consider the following 112-residue polypeptide: Transcriptional regulator ClgR (112 aa).

The HTH cro/C1-type domain occupies 13-67; it reads LRGARMSQGRTLREVSDSARVSLGYLSEIERGRKEPSSELLSAICTALQLPLSVV. The H-T-H motif DNA-binding region spans 24–43; it reads LREVSDSARVSLGYLSEIER.

Its function is as follows. Key stress-response regulator that plays an important role in multiple regulatory networks in response to different stress conditions. Required to manage host-derived stress during infection. Plays a role during hypoxia and reaeration. Controls the expression of many genes involved in heat shock, virulence, lipid metabolism, transport or regulation, including clpP1, clpP2, clpC1, hsp, groES, otsA, pknD, prcA and prcB. May function by protecting intracellular redox potential and by inducing the expression of trehalose, a constituent of cell walls that is important for defense against cell-surface and oxidative stress. Also performs different functions during stress response and is important for the pathogenicity of M.tuberculosis in vivo, regardless of the induction of the Clp proteolytic pathway. May directly activate SigE and/or SigH. This Mycobacterium tuberculosis (strain CDC 1551 / Oshkosh) protein is Transcriptional regulator ClgR (clgR).